The following is a 57-amino-acid chain: UPF0391 membrane protein RPB_2510 (57 aa).

2 helical membrane-spanning segments follow: residues 6–26 (WALIFLVISVIAGIFGFTGIS) and 35–55 (ILFYIFAVIFIVLLILGFTIF).

This sequence belongs to the UPF0391 family.

It localises to the cell membrane. The chain is UPF0391 membrane protein RPB_2510 from Rhodopseudomonas palustris (strain HaA2).